Consider the following 281-residue polypeptide: Phosphonates import ATP-binding protein PhnC 2 (281 aa).

The region spanning 4–238 (LTVDNVTKTY…LVDDLYGNVE (235 aa)) is the ABC transporter domain. 35–42 (GESGAGKS) lines the ATP pocket. Residues 243 to 281 (ATDNSDNSTVDTSDGTRYDTETGSDGTDEVDVIGRQVES) form a disordered region. A compositionally biased stretch (low complexity) spans 244–255 (TDNSDNSTVDTS).

This sequence belongs to the ABC transporter superfamily. Phosphonates importer (TC 3.A.1.9.1) family. As to quaternary structure, the complex is composed of two ATP-binding proteins (PhnC), two transmembrane proteins (PhnE) and a solute-binding protein (PhnD).

The protein localises to the cell membrane. The catalysed reaction is phosphonate(out) + ATP + H2O = phosphonate(in) + ADP + phosphate + H(+). Part of the ABC transporter complex PhnCDE involved in phosphonates import. Responsible for energy coupling to the transport system. The chain is Phosphonates import ATP-binding protein PhnC 2 from Haloquadratum walsbyi (strain DSM 16790 / HBSQ001).